The primary structure comprises 552 residues: Steroid transmembrane transporter SLC22A24 (552 aa).

A run of 12 helical transmembrane segments spans residues 16–36 (FQILQLAFLCIANILLFPHIL), 146–166 (SVVQSLFMAGSLLGSVIFGYL), 174–194 (MICSWCLLQLAISDTCAAFAP), 204–224 (FLAGSCVMTIMGHSFLLVIEW), 235–255 (TLLLCASSVGQMLLGGLAFVI), 260–280 (TLQLTVSIPIFVIFLSSRWLV), 349–369 (IVLYLGFVRLAVSVPLYGLIF), 380–400 (LFQVLFGAITATARFVALLVM), 407–427 (ISQVLFLLPVGLFILVNTFLD), 436–456 (ILATLGAGVLCIATTSGSVHF), 473–493 (ILFSRIGAALAPLLMIFVGFS), and 495–515 (YLPWITYGVFPILAGLVVLLL).

Belongs to the major facilitator (TC 2.A.1) superfamily. Organic cation transporter (TC 2.A.1.19) family.

It is found in the cell membrane. It carries out the reaction estrone 3-sulfate(out) + glutarate(in) = estrone 3-sulfate(in) + glutarate(out). The enzyme catalyses 17beta-estradiol 17-O-(beta-D-glucuronate)(out) + glutarate(in) = 17beta-estradiol 17-O-(beta-D-glucuronate)(in) + glutarate(out). It catalyses the reaction 5alpha-androstane-3alpha,17beta-diol 3-O-(beta-D-glucuronate)(out) + glutarate(in) = 5alpha-androstane-3alpha,17beta-diol 3-O-(beta-D-glucuronate)(in) + glutarate(out). The catalysed reaction is dehydroepiandrosterone 3-sulfate(out) + glutarate(in) = dehydroepiandrosterone 3-sulfate(in) + glutarate(out). It carries out the reaction glutarate(in) + succinate(out) = glutarate(out) + succinate(in). Functionally, renal transmembrane organic anion/dicarboxylate exchanger that participates in the reabsorption of conjugated steroids, as well as bile acids, driven by an outward gradient of dicarboxylates such as glutarate or succinate. Transports androstanediol glucuronide (5alpha-androstane-3alpha,17beta-diol 3-O-(beta-D-glucuronate)), estrone 3-sulfate, and estradiol-17-glucuronide (17beta-estradiol 17-O-(beta-D-glucuronate)), but not taurocholate. This chain is Steroid transmembrane transporter SLC22A24, found in Microcebus murinus (Gray mouse lemur).